Here is a 52-residue protein sequence, read N- to C-terminus: Light-harvesting protein B-870 alpha chain (52 aa).

Residues Met1–Arg15 are Cytoplasmic-facing. Residues Val16–Leu36 form a helical membrane-spanning segment. His32 serves as a coordination point for a bacteriochlorophyll. The Periplasmic segment spans residues Ser37 to Gln52.

Belongs to the antenna complex alpha subunit family. In terms of assembly, the core complex is formed by different alpha and beta chains, binding bacteriochlorophyll molecules, and arranged most probably in tetrameric structures disposed around the reaction center. The non-pigmented gamma chains may constitute additional components.

Its subcellular location is the cell inner membrane. Antenna complexes are light-harvesting systems, which transfer the excitation energy to the reaction centers. The chain is Light-harvesting protein B-870 alpha chain (pufA) from Roseobacter denitrificans (strain ATCC 33942 / OCh 114) (Erythrobacter sp. (strain OCh 114)).